An 899-amino-acid chain; its full sequence is Protein translocase subunit SecA (899 aa).

Residues glutamine 87, 105 to 109, and aspartate 516 each bind ATP; that span reads GEGKT. Positions 884, 886, 895, and 896 each coordinate Zn(2+).

It belongs to the SecA family. In terms of assembly, monomer and homodimer. Part of the essential Sec protein translocation apparatus which comprises SecA, SecYEG and auxiliary proteins SecDF. Other proteins may also be involved. Zn(2+) serves as cofactor.

The protein resides in the cell inner membrane. It is found in the cytoplasm. It carries out the reaction ATP + H2O + cellular proteinSide 1 = ADP + phosphate + cellular proteinSide 2.. Its function is as follows. Part of the Sec protein translocase complex. Interacts with the SecYEG preprotein conducting channel. Has a central role in coupling the hydrolysis of ATP to the transfer of proteins into and across the cell membrane, serving as an ATP-driven molecular motor driving the stepwise translocation of polypeptide chains across the membrane. This chain is Protein translocase subunit SecA, found in Borreliella burgdorferi (strain ATCC 35210 / DSM 4680 / CIP 102532 / B31) (Borrelia burgdorferi).